The following is a 150-amino-acid chain: Large ribosomal subunit protein bL9 (150 aa).

The protein belongs to the bacterial ribosomal protein bL9 family.

In terms of biological role, binds to the 23S rRNA. This is Large ribosomal subunit protein bL9 from Shewanella putrefaciens (strain CN-32 / ATCC BAA-453).